The primary structure comprises 687 residues: Fatty acid oxidation complex subunit alpha (687 aa).

The tract at residues 1–191 is enoyl-CoA hydratase; that stretch reads MKNTSAFAWT…KLGVVDASVP (191 aa). The tract at residues 307–687 is 3-hydroxyacyl-CoA dehydrogenase; that stretch reads KSIDYVGVLG…ADKYGDRFIE (381 aa).

The protein in the N-terminal section; belongs to the enoyl-CoA hydratase/isomerase family. This sequence in the central section; belongs to the 3-hydroxyacyl-CoA dehydrogenase family. Heterotetramer of two alpha chains (FadJ) and two beta chains (FadI).

It is found in the cytoplasm. The catalysed reaction is a (3S)-3-hydroxyacyl-CoA = a (2E)-enoyl-CoA + H2O. It catalyses the reaction a 4-saturated-(3S)-3-hydroxyacyl-CoA = a (3E)-enoyl-CoA + H2O. It carries out the reaction a (3S)-3-hydroxyacyl-CoA + NAD(+) = a 3-oxoacyl-CoA + NADH + H(+). The enzyme catalyses (3S)-3-hydroxybutanoyl-CoA = (3R)-3-hydroxybutanoyl-CoA. It functions in the pathway lipid metabolism; fatty acid beta-oxidation. In terms of biological role, catalyzes the formation of a hydroxyacyl-CoA by addition of water on enoyl-CoA. Also exhibits 3-hydroxyacyl-CoA epimerase and 3-hydroxyacyl-CoA dehydrogenase activities. The sequence is that of Fatty acid oxidation complex subunit alpha from Aliivibrio fischeri (strain ATCC 700601 / ES114) (Vibrio fischeri).